A 597-amino-acid polypeptide reads, in one-letter code: Elongation factor 4 (597 aa).

Residues Lys-2–Thr-184 form the tr-type G domain. GTP contacts are provided by residues Asp-14–Thr-19 and Asn-131–Asp-134.

This sequence belongs to the TRAFAC class translation factor GTPase superfamily. Classic translation factor GTPase family. LepA subfamily.

It is found in the cell inner membrane. It carries out the reaction GTP + H2O = GDP + phosphate + H(+). Required for accurate and efficient protein synthesis under certain stress conditions. May act as a fidelity factor of the translation reaction, by catalyzing a one-codon backward translocation of tRNAs on improperly translocated ribosomes. Back-translocation proceeds from a post-translocation (POST) complex to a pre-translocation (PRE) complex, thus giving elongation factor G a second chance to translocate the tRNAs correctly. Binds to ribosomes in a GTP-dependent manner. The chain is Elongation factor 4 from Neisseria meningitidis serogroup B (strain ATCC BAA-335 / MC58).